A 435-amino-acid chain; its full sequence is Prenyltransferase nanD (435 aa).

Glu-101 is a substrate binding site. Dimethylallyl diphosphate contacts are provided by Arg-114, Lys-202, and Tyr-204. Position 206 (Tyr-206) interacts with substrate. The dimethylallyl diphosphate site is built by Lys-280, Tyr-282, Tyr-364, Tyr-429, and Tyr-433.

The protein belongs to the tryptophan dimethylallyltransferase family.

The protein operates within secondary metabolite biosynthesis. Prenyltransferase; part of the gene cluster that mediates the biosynthesis of the benzazepine alkaloid nanangelenin A which contains an unprecedented 3,4-dihydro-1-benzazepine-2,5-dione-N-prenyl-N-acetoxy-anthranilamide scaffold. The first step of nanangelenin biosynthesis is catalyzed by the indoleamine 2,3-dioxygenase nanC which produces N-formyl-kynurenine through the catabolism of tryptophan. The two-module NRPS nanA then utilizes anthranilate (Ant) and L-kynurenine (L-Kyn) to assemble the dipeptide product nanangelenin B. The first adenylation domain of nanA (A1) loads anthranilate onto the T1 domain, while A2 loads kynurenine, generated through spontaneous nonenzymatic deformylation of the nanC-supplied N-formyl-kynurenine. The peptide bond formation between the tethered amino acids is catalyzed by the first condensation domain (C1) between anthranilate's carbonyl carbon and kynurenine's aliphatic primary amine. The second C domain (C2) catalyzes the final cyclization event between the aromatic amine of kynurenine and the tethered carbonyl carbon, yielding nanangelenin B. The terminal T3 domain enhances the catalytic efficiency of C2, suggesting the T2-tethered Ant-L-Kyn is transferred to T3 prior to cyclization by C2. Once released from nanA, nanangelenin B is then prenylated by the prenyltransferase nanD to form nanangelenin C. Nanangelenin C is then N-hydroxylated by the FAD-dependent monooxygenase nanF and further acetylated by the acetyltransferase nanB to yield nanangelenin F. Finally, the N-methyltransferase nanE methylates the amide nitrogen of 1-benzazepine to convert nanangelenin F into nanangelenin A. NanE is also able to methylate most of the intermediates of the pathway such as nanangelenin B and nanangelenin C to produce nanangelenin D and nanangelenin E, respectively. This chain is Prenyltransferase nanD, found in Aspergillus nanangensis.